A 2094-amino-acid chain; its full sequence is Protein Ycf2 (2094 aa).

1385–1392 (GPPETGRS) is an ATP binding site.

This sequence belongs to the Ycf2 family.

Its subcellular location is the plastid. It is found in the chloroplast stroma. In terms of biological role, probable ATPase of unknown function. Its presence in a non-photosynthetic plant (Epifagus virginiana) and experiments in tobacco indicate that it has an essential function which is probably not related to photosynthesis. The chain is Protein Ycf2 from Huperzia lucidula (Shining clubmoss).